We begin with the raw amino-acid sequence, 169 residues long: 16S rRNA aminocarboxypropyltransferase (169 aa).

Residues T17, L67, L90, and T109 each coordinate S-adenosyl-L-methionine.

Belongs to the TDD superfamily. TSR3 family.

The protein localises to the cytoplasm. The catalysed reaction is an N(1)-methylpseudouridine in rRNA + S-adenosyl-L-methionine = N(1)-methyl-N(3)-[(3S)-3-amino-3-carboxypropyl]pseudouridine in rRNA + S-methyl-5'-thioadenosine + H(+). Its function is as follows. Aminocarboxypropyltransferase that catalyzes the aminocarboxypropyl transfer on pseudouridine corresponding to position 914 in M.jannaschii 16S rRNA. It constitutes the last step in biosynthesis of the hypermodified N1-methyl-N3-(3-amino-3-carboxypropyl) pseudouridine (m1acp3-Psi). The sequence is that of 16S rRNA aminocarboxypropyltransferase from Methanothermobacter thermautotrophicus (strain ATCC 29096 / DSM 1053 / JCM 10044 / NBRC 100330 / Delta H) (Methanobacterium thermoautotrophicum).